The chain runs to 189 residues: GTP cyclohydrolase 1 (189 aa).

Residues C78, H81, and C150 each coordinate Zn(2+).

The protein belongs to the GTP cyclohydrolase I family. In terms of assembly, homomer.

It catalyses the reaction GTP + H2O = 7,8-dihydroneopterin 3'-triphosphate + formate + H(+). It participates in cofactor biosynthesis; 7,8-dihydroneopterin triphosphate biosynthesis; 7,8-dihydroneopterin triphosphate from GTP: step 1/1. The protein is GTP cyclohydrolase 1 of Bacillus anthracis (strain A0248).